A 430-amino-acid chain; its full sequence is MNKLESPSEIDVAGPSPRHKTTQVMVGNVAVGGGAPIVVQSMTNTDTADIEGTIAQVAALSRAGSEMVRMTVDRDEAAAAVPHIRDGLRKRGITTPLIGDFHYIGHKLLADHPSCAEALDKYRINPGNVGFKDKRDKQFTDIVETAIKYGKAVRIGANWGSLDQELLTHLMEENANSAAPLDARAVTREAMVQSALLSAKRAEEIGLPKTRMVLSAKVSAVQDLIAVYQTLASRSDYAIHLGLTEAGMGSKGIVASSAALGILLQQGIGDTIRISLTPEPGGDRTLEVQVAQELLQTMGFRTFVPLVAACPGCGRTTSTTFQELARSIQDFIRDEMPNWKTQYPGVEQLNVAVMGCIVNGPGESKHADIGISLPGTGEAPAAPVFVDGKKFKTLRGPAIAQDFKALVIDYIEQRYGDAAKARAEAVSAAE.

The [4Fe-4S] cluster site is built by cysteine 310, cysteine 313, cysteine 356, and glutamate 363.

Belongs to the IspG family. [4Fe-4S] cluster serves as cofactor.

It carries out the reaction (2E)-4-hydroxy-3-methylbut-2-enyl diphosphate + oxidized [flavodoxin] + H2O + 2 H(+) = 2-C-methyl-D-erythritol 2,4-cyclic diphosphate + reduced [flavodoxin]. It functions in the pathway isoprenoid biosynthesis; isopentenyl diphosphate biosynthesis via DXP pathway; isopentenyl diphosphate from 1-deoxy-D-xylulose 5-phosphate: step 5/6. Converts 2C-methyl-D-erythritol 2,4-cyclodiphosphate (ME-2,4cPP) into 1-hydroxy-2-methyl-2-(E)-butenyl 4-diphosphate. This chain is 4-hydroxy-3-methylbut-2-en-1-yl diphosphate synthase (flavodoxin), found in Nitrobacter winogradskyi (strain ATCC 25391 / DSM 10237 / CIP 104748 / NCIMB 11846 / Nb-255).